A 360-amino-acid polypeptide reads, in one-letter code: D-alanine--D-alanine ligase (360 aa).

Positions 149-353 (KKLMAAEGLP…YEELLDVLVQ (205 aa)) constitute an ATP-grasp domain. 176–231 (KNLLGLPVFVKPARGGSSIGISRVTAWEDFNKAVGLARAHDEKVIVESEIVGSEVE) contributes to the ATP binding site. Mg(2+) is bound by residues Asp-308, Glu-320, and Asn-322.

This sequence belongs to the D-alanine--D-alanine ligase family. Mg(2+) serves as cofactor. Requires Mn(2+) as cofactor.

The protein localises to the cytoplasm. The catalysed reaction is 2 D-alanine + ATP = D-alanyl-D-alanine + ADP + phosphate + H(+). The protein operates within cell wall biogenesis; peptidoglycan biosynthesis. Its function is as follows. Cell wall formation. The sequence is that of D-alanine--D-alanine ligase from Corynebacterium glutamicum (strain ATCC 13032 / DSM 20300 / JCM 1318 / BCRC 11384 / CCUG 27702 / LMG 3730 / NBRC 12168 / NCIMB 10025 / NRRL B-2784 / 534).